Here is a 301-residue protein sequence, read N- to C-terminus: 2-(hydroxymethyl)glutarate dehydrogenase (301 aa).

NAD(+) contacts are provided by residues Gly8–Asn22 and Ser99. Residue Lys174 is part of the active site. Lys243 is a binding site for NAD(+).

It belongs to the HIBADH-related family. As to quaternary structure, homotetramer.

The enzyme catalyses (S)-2-hydroxymethylglutarate + NAD(+) = 2-formylglutarate + NADH + H(+). It participates in cofactor degradation; nicotinate degradation; propanoate and pyruvate from 6-hydroxynicotinate: step 3/8. Functionally, catalyzes the conversion of 2-formylglutarate to (S)-2-hydroxymethylglutarate. Has very low activity with (S)-3-hydroxyisobutyrate. The chain is 2-(hydroxymethyl)glutarate dehydrogenase from Eubacterium barkeri (Clostridium barkeri).